Here is a 366-residue protein sequence, read N- to C-terminus: Quinolinate synthase (366 aa).

Iminosuccinate contacts are provided by His-44 and Ser-61. Cys-108 provides a ligand contact to [4Fe-4S] cluster. Residues 139 to 141 (YIN) and Ser-160 contribute to the iminosuccinate site. Cys-228 contributes to the [4Fe-4S] cluster binding site. Iminosuccinate is bound by residues 254–256 (HPE) and Thr-271. Cys-318 lines the [4Fe-4S] cluster pocket.

The protein belongs to the quinolinate synthase family. Type 3 subfamily. The cofactor is [4Fe-4S] cluster.

It localises to the cytoplasm. The enzyme catalyses iminosuccinate + dihydroxyacetone phosphate = quinolinate + phosphate + 2 H2O + H(+). The protein operates within cofactor biosynthesis; NAD(+) biosynthesis; quinolinate from iminoaspartate: step 1/1. In terms of biological role, catalyzes the condensation of iminoaspartate with dihydroxyacetone phosphate to form quinolinate. The polypeptide is Quinolinate synthase (Listeria monocytogenes serovar 1/2a (strain ATCC BAA-679 / EGD-e)).